The primary structure comprises 236 residues: Small ribosomal subunit protein bS21m (236 aa).

Residues 65–136 (KPAAGAAAGG…SSKPSPMQTW (72 aa)) are disordered. Positions 107–131 (SNSSTSSSSSSSSSGGALYSSSKPS) are enriched in low complexity.

The protein belongs to the bacterial ribosomal protein bS21 family. As to quaternary structure, component of the mitochondrial small ribosomal subunit (mt-SSU). Mature N.crassa 74S mitochondrial ribosomes consist of a small (37S) and a large (54S) subunit. The 37S small subunit contains a 16S ribosomal RNA (16S mt-rRNA) and 32 different proteins. The 54S large subunit contains a 23S rRNA (23S mt-rRNA) and 42 different proteins.

The protein resides in the mitochondrion. Functionally, component of the mitochondrial ribosome (mitoribosome), a dedicated translation machinery responsible for the synthesis of mitochondrial genome-encoded proteins, including at least some of the essential transmembrane subunits of the mitochondrial respiratory chain. The mitoribosomes are attached to the mitochondrial inner membrane and translation products are cotranslationally integrated into the membrane. The protein is Small ribosomal subunit protein bS21m (mrp21) of Neurospora crassa (strain ATCC 24698 / 74-OR23-1A / CBS 708.71 / DSM 1257 / FGSC 987).